We begin with the raw amino-acid sequence, 262 residues long: MWITQEITPYLRKEYTIEAKLLDVRSEHNILEIFKSKDFGEIAMLNCQLLFKNFLHIESELLAHMGGCTKKELKEVLIVDGFDLELAHQLFKYDTRIDFVQADEKILDSFISFFPHFHEVKNNKNFTHAKQLLDLDIKKYDLILCLQEPDIHKIDGLKRMLKEDGVFISVAKHPLLEHVSMQNALKNLGDFFPITIPFVAPLRILSNKGYIYASFKTHPLKDLMTPKIEALKSVRYYNEDIHRAAFALPKNLQEVFKDNIKS.

Residues 1–249 (MWITQEITPY…DIHRAAFALP (249 aa)) form the PABS domain. Asparagine 29 serves as a coordination point for S-methyl-5'-thioadenosine. Aspartate 83 contributes to the spermidine binding site. The active-site Proton acceptor is aspartate 155.

Belongs to the spermidine/spermine synthase family. As to quaternary structure, homodimer or homotetramer.

It localises to the cytoplasm. The enzyme catalyses S-adenosyl 3-(methylsulfanyl)propylamine + putrescine = S-methyl-5'-thioadenosine + spermidine + H(+). The protein operates within amine and polyamine biosynthesis; spermidine biosynthesis; spermidine from putrescine: step 1/1. In terms of biological role, catalyzes the irreversible transfer of a propylamine group from the amino donor S-adenosylmethioninamine (decarboxy-AdoMet) to putrescine (1,4-diaminobutane) to yield spermidine. The polypeptide is Polyamine aminopropyltransferase (Helicobacter pylori (strain P12)).